Consider the following 139-residue polypeptide: ATP synthase epsilon chain (139 aa).

Belongs to the ATPase epsilon chain family. In terms of assembly, F-type ATPases have 2 components, CF(1) - the catalytic core - and CF(0) - the membrane proton channel. CF(1) has five subunits: alpha(3), beta(3), gamma(1), delta(1), epsilon(1). CF(0) has three main subunits: a, b and c.

It is found in the cell inner membrane. Produces ATP from ADP in the presence of a proton gradient across the membrane. The sequence is that of ATP synthase epsilon chain from Pseudomonas putida (strain ATCC 700007 / DSM 6899 / JCM 31910 / BCRC 17059 / LMG 24140 / F1).